A 292-amino-acid polypeptide reads, in one-letter code: Small ribosomal subunit protein uS5 (292 aa).

Residues 1-56 are disordered; that stretch reads MADDAGAAGGPGGPGGPGMGGRGGFRGGFGSGIRGRGRGRGRGRGRGRGARGGKAE. The residue at position 2 (Ala-2) is an N-acetylalanine. Residues 7–34 show a composition bias toward gly residues; it reads AAGGPGGPGGPGMGGRGGFRGGFGSGIR. Positions 35–51 are enriched in basic residues; sequence GRGRGRGRGRGRGRGAR. Glycyl lysine isopeptide (Lys-Gly) (interchain with G-Cter in ubiquitin) cross-links involve residues Lys-54 and Lys-58. The 64-residue stretch at 102-165 folds into the S5 DRBM domain; sequence LKDEVLKIMP…ILAKLSIVPV (64 aa). Thr-251 carries the phosphothreonine modification. Lys-262 is modified (N6-acetyllysine). The residue at position 263 (Ser-263) is a Phosphoserine. The residue at position 269 (Thr-269) is a Phosphothreonine. An N6-acetyllysine; alternate modification is found at Lys-274. Residue Lys-274 forms a Glycyl lysine isopeptide (Lys-Gly) (interchain with G-Cter in SUMO1); alternate linkage. A Glycyl lysine isopeptide (Lys-Gly) (interchain with G-Cter in SUMO2); alternate cross-link involves residue Lys-274. Lys-274 participates in a covalent cross-link: Glycyl lysine isopeptide (Lys-Gly) (interchain with G-Cter in ubiquitin); alternate. Phosphoserine is present on Ser-280.

It belongs to the universal ribosomal protein uS5 family. In terms of assembly, component of the small ribosomal subunit. Interacts with zinc finger protein ZNF277 (via zinc-finger domains); the interaction is direct; the interaction is extra-ribosomal. Interaction with ZNF277 competes with the binding of RPS2 to protein arginine methyltransferase PRMT3. In terms of processing, citrullinated by PADI4 in the Arg/Gly-rich region. Post-translationally, asymmetric arginine dimethylation by PRMT3 occurs at multiple sites in the Arg/Gly-rich region. Monoubiquitinated at Lys-54 and Lys-58 by RNF10 when a ribosome has stalled during translation, leading to its degradation by the proteasome. Deubiquitinated at Lys-54 and Lys-58 by USP10, preventing degradation by the proteasome and promoting 40S ribosome subunit recycling following ribosome dissociation.

The protein resides in the cytoplasm. The protein localises to the nucleus. It localises to the nucleolus. Functionally, component of the ribosome, a large ribonucleoprotein complex responsible for the synthesis of proteins in the cell. The small ribosomal subunit (SSU) binds messenger RNAs (mRNAs) and translates the encoded message by selecting cognate aminoacyl-transfer RNA (tRNA) molecules. The large subunit (LSU) contains the ribosomal catalytic site termed the peptidyl transferase center (PTC), which catalyzes the formation of peptide bonds, thereby polymerizing the amino acids delivered by tRNAs into a polypeptide chain. The nascent polypeptides leave the ribosome through a tunnel in the LSU and interact with protein factors that function in enzymatic processing, targeting, and the membrane insertion of nascent chains at the exit of the ribosomal tunnel. Plays a role in the assembly and function of the 40S ribosomal subunit. In Oryctolagus cuniculus (Rabbit), this protein is Small ribosomal subunit protein uS5 (RPS2).